A 154-amino-acid chain; its full sequence is Dau c 1 isoallergen Dau c 1.0301 (154 aa).

The protein belongs to the BetVI family. As to expression, expressed in roots.

The polypeptide is Dau c 1 isoallergen Dau c 1.0301 (Daucus carota (Wild carrot)).